The primary structure comprises 380 residues: Outer mitochondrial transmembrane helix translocase (380 aa).

Residues 1-18 lie on the Mitochondrial intermembrane side of the membrane; that stretch reads MLSDIPRDALLRPLTRNE. A helical membrane pass occupies residues 19–37; sequence VVGMLVRLTVFGAATYYSI. Over 38-380 the chain is Cytoplasmic; the sequence is KWVVDALDPT…PANLREVPLD (343 aa). An ATP-binding site is contributed by 136 to 143; that stretch reads GPPGCGKT.

This sequence belongs to the AAA ATPase family. MSP1 subfamily.

The protein resides in the mitochondrion outer membrane. The protein localises to the peroxisome membrane. It is found in the postsynaptic cell membrane. The catalysed reaction is [protein]-with a C-terminal TM segment(out) + ATP + H2O = [protein]-with a C-terminal TM segment(in) + ADP + phosphate + H(+). Functionally, outer mitochondrial translocase required to remove mislocalized tail-anchored transmembrane proteins on mitochondria. Specifically recognizes and binds tail-anchored transmembrane proteins: acts as a dislocase that mediates the ATP-dependent extraction of mistargeted tail-anchored transmembrane proteins from the mitochondrion outer membrane. Also plays a critical role in regulating the surface expression of AMPA receptors (AMPAR), thereby regulating synaptic plasticity and learning and memory. This chain is Outer mitochondrial transmembrane helix translocase, found in Danio rerio (Zebrafish).